Consider the following 485-residue polypeptide: Probable L-xylulose kinase (485 aa).

It belongs to the FGGY kinase family. Homodimer.

The enzyme catalyses L-xylulose + ATP = L-xylulose 5-phosphate + ADP + H(+). This Haemophilus influenzae (strain ATCC 51907 / DSM 11121 / KW20 / Rd) protein is Probable L-xylulose kinase (lyx).